A 363-amino-acid polypeptide reads, in one-letter code: Uroporphyrinogen decarboxylase (363 aa).

Substrate is bound by residues 27–31 (RQAGR), aspartate 77, tyrosine 157, threonine 212, and histidine 333.

Belongs to the uroporphyrinogen decarboxylase family. As to quaternary structure, homodimer.

The protein resides in the cytoplasm. The catalysed reaction is uroporphyrinogen III + 4 H(+) = coproporphyrinogen III + 4 CO2. The protein operates within porphyrin-containing compound metabolism; protoporphyrin-IX biosynthesis; coproporphyrinogen-III from 5-aminolevulinate: step 4/4. In terms of biological role, catalyzes the decarboxylation of four acetate groups of uroporphyrinogen-III to yield coproporphyrinogen-III. This is Uroporphyrinogen decarboxylase from Cupriavidus necator (strain ATCC 17699 / DSM 428 / KCTC 22496 / NCIMB 10442 / H16 / Stanier 337) (Ralstonia eutropha).